A 229-amino-acid chain; its full sequence is Heptaprenylglyceryl phosphate synthase (229 aa).

Lysine 12 is a binding site for sn-glycerol 1-phosphate. The Mg(2+) site is built by aspartate 14 and serine 40. Residues 159–164 (YLEYSG), glycine 189, and 209–210 (GN) contribute to the sn-glycerol 1-phosphate site.

It belongs to the GGGP/HepGP synthase family. Group I subfamily. Homodimer. The cofactor is Mg(2+).

The enzyme catalyses sn-glycerol 1-phosphate + all-trans-heptaprenyl diphosphate = 3-heptaprenyl-sn-glycero-1-phosphate + diphosphate. It participates in membrane lipid metabolism; glycerophospholipid metabolism. In terms of biological role, prenyltransferase that catalyzes in vivo the transfer of the heptaprenyl moiety of heptaprenyl pyrophosphate (HepPP; 35 carbon atoms) to the C3 hydroxyl of sn-glycerol-1-phosphate (G1P), producing heptaprenylglyceryl phosphate (HepGP). This reaction is an ether-bond-formation step in the biosynthesis of archaea-type G1P-based membrane lipids found in Bacillales. This Bacillus cereus (strain AH187) protein is Heptaprenylglyceryl phosphate synthase.